A 495-amino-acid chain; its full sequence is GTPase Der (495 aa).

Residues 3 to 178 (AKIALVGRPN…EMRDLLPEED (176 aa)) form the EngA-type G 1 domain. GTP is bound by residues 9–16 (GRPNVGKS), 57–61 (DTGGI), and 130–133 (NKVD). Positions 190–227 (TAVASADADVDADVETEGGTSASETEEGITEETVEDEP) are disordered. The span at 213-227 (ETEEGITEETVEDEP) shows a compositional bias: acidic residues. Residues 231–404 (LRLCMLGRPN…LAARIRRECS (174 aa)) form the EngA-type G 2 domain. Residues 237–244 (GRPNAGKS), 284–288 (DTAGV), and 349–352 (NKMD) contribute to the GTP site. Positions 405 to 489 (VRIPTGQLNR…PMRVHFRSSH (85 aa)) constitute a KH-like domain.

Belongs to the TRAFAC class TrmE-Era-EngA-EngB-Septin-like GTPase superfamily. EngA (Der) GTPase family. Associates with the 50S ribosomal subunit.

Functionally, GTPase that plays an essential role in the late steps of ribosome biogenesis. This is GTPase Der from Nitratidesulfovibrio vulgaris (strain DP4) (Desulfovibrio vulgaris).